The following is a 174-amino-acid chain: Large ribosomal subunit protein uL10 (174 aa).

The protein belongs to the universal ribosomal protein uL10 family. As to quaternary structure, part of the ribosomal stalk of the 50S ribosomal subunit. The N-terminus interacts with L11 and the large rRNA to form the base of the stalk. The C-terminus forms an elongated spine to which L12 dimers bind in a sequential fashion forming a multimeric L10(L12)X complex.

Its function is as follows. Forms part of the ribosomal stalk, playing a central role in the interaction of the ribosome with GTP-bound translation factors. The sequence is that of Large ribosomal subunit protein uL10 from Bordetella petrii (strain ATCC BAA-461 / DSM 12804 / CCUG 43448).